The sequence spans 417 residues: Probable sugar-binding periplasmic protein (417 aa).

A signal peptide spans 1–21 (MLRKLLIGTALATSFAFSAHA).

The protein belongs to the bacterial solute-binding protein 1 family.

The protein resides in the periplasm. In terms of biological role, part of a binding-protein-dependent transport system for a sugar. This Mesorhizobium japonicum (strain LMG 29417 / CECT 9101 / MAFF 303099) (Mesorhizobium loti (strain MAFF 303099)) protein is Probable sugar-binding periplasmic protein.